The sequence spans 103 residues: Acylphosphatase-2 (103 aa).

Residue serine 2 is modified to N-acetylserine. One can recognise an Acylphosphatase-like domain in the interval 13–103; it reads SVDYEVFGRV…LDFSGFSTRY (91 aa). Catalysis depends on residues arginine 28 and asparagine 46.

Belongs to the acylphosphatase family.

It carries out the reaction an acyl phosphate + H2O = a carboxylate + phosphate + H(+). In terms of biological role, its physiological role is not yet clear. The sequence is that of Acylphosphatase-2 (ACYP2) from Gallus gallus (Chicken).